Reading from the N-terminus, the 455-residue chain is Argininosuccinate synthase (455 aa).

ATP-binding positions include 17 to 25 (AFSGGLDTS) and Ala43. L-citrulline is bound at residue Tyr99. 2 residues coordinate ATP: Gly129 and Thr131. L-aspartate is bound by residues Thr131, Asn135, and Asp136. Asn135 provides a ligand contact to L-citrulline. An ATP-binding site is contributed by Asp136. Positions 139 and 192 each coordinate L-citrulline. Asp194 contacts ATP. 3 residues coordinate L-citrulline: Thr201, Glu203, and Glu280. Residues 434 to 448 (TGLPQVDNNNLSSGR) show a composition bias toward polar residues. Positions 434–455 (TGLPQVDNNNLSSGRGLQDKRQ) are disordered.

The protein belongs to the argininosuccinate synthase family. Type 2 subfamily. Homotetramer.

The protein resides in the cytoplasm. It catalyses the reaction L-citrulline + L-aspartate + ATP = 2-(N(omega)-L-arginino)succinate + AMP + diphosphate + H(+). It participates in amino-acid biosynthesis; L-arginine biosynthesis; L-arginine from L-ornithine and carbamoyl phosphate: step 2/3. This chain is Argininosuccinate synthase (argG), found in Yersinia pestis.